A 255-amino-acid chain; its full sequence is Probable transcriptional regulatory protein PCC8801_2028 (255 aa).

This sequence belongs to the TACO1 family.

It is found in the cytoplasm. The protein is Probable transcriptional regulatory protein PCC8801_2028 of Rippkaea orientalis (strain PCC 8801 / RF-1) (Cyanothece sp. (strain PCC 8801)).